Consider the following 128-residue polypeptide: Gastrotropin (128 aa).

A2 is subject to N-acetylalanine.

It belongs to the calycin superfamily. Fatty-acid binding protein (FABP) family. Expressed in ileum.

The protein resides in the cytoplasm. It localises to the membrane. Functionally, binds to bile acids and is involved in enterohepatic bile acid metabolism. Required for efficient apical to basolateral transport of conjugated bile acids in ileal enterocytes. Stimulates gastric acid and pepsinogen secretion. The polypeptide is Gastrotropin (FABP6) (Oryctolagus cuniculus (Rabbit)).